A 474-amino-acid polypeptide reads, in one-letter code: tRNA modification GTPase MnmE (474 aa).

Residues arginine 23, glutamate 86, and lysine 125 each coordinate (6S)-5-formyl-5,6,7,8-tetrahydrofolate. In terms of domain architecture, TrmE-type G spans 221–396 (GIPVAIVGEP…LKEKLLEYVN (176 aa)). Asparagine 231 is a binding site for K(+). GTP-binding positions include 231-236 (NVGKST), 250-256 (SEIAGTT), and 275-278 (DTAG). A Mg(2+)-binding site is contributed by serine 235. Residues serine 250, isoleucine 252, and threonine 255 each contribute to the K(+) site. Threonine 256 is a Mg(2+) binding site. Lysine 474 contributes to the (6S)-5-formyl-5,6,7,8-tetrahydrofolate binding site.

Belongs to the TRAFAC class TrmE-Era-EngA-EngB-Septin-like GTPase superfamily. TrmE GTPase family. In terms of assembly, homodimer. Heterotetramer of two MnmE and two MnmG subunits. Requires K(+) as cofactor.

The protein localises to the cytoplasm. In terms of biological role, exhibits a very high intrinsic GTPase hydrolysis rate. Involved in the addition of a carboxymethylaminomethyl (cmnm) group at the wobble position (U34) of certain tRNAs, forming tRNA-cmnm(5)s(2)U34. The sequence is that of tRNA modification GTPase MnmE from Christiangramia forsetii (strain DSM 17595 / CGMCC 1.15422 / KT0803) (Gramella forsetii).